The following is a 152-amino-acid chain: SsrA-binding protein (152 aa).

This sequence belongs to the SmpB family.

It localises to the cytoplasm. Functionally, required for rescue of stalled ribosomes mediated by trans-translation. Binds to transfer-messenger RNA (tmRNA), required for stable association of tmRNA with ribosomes. tmRNA and SmpB together mimic tRNA shape, replacing the anticodon stem-loop with SmpB. tmRNA is encoded by the ssrA gene; the 2 termini fold to resemble tRNA(Ala) and it encodes a 'tag peptide', a short internal open reading frame. During trans-translation Ala-aminoacylated tmRNA acts like a tRNA, entering the A-site of stalled ribosomes, displacing the stalled mRNA. The ribosome then switches to translate the ORF on the tmRNA; the nascent peptide is terminated with the 'tag peptide' encoded by the tmRNA and targeted for degradation. The ribosome is freed to recommence translation, which seems to be the essential function of trans-translation. The polypeptide is SsrA-binding protein (Rickettsia canadensis (strain McKiel)).